The following is a 254-amino-acid chain: Fasciclin-like arabinogalactan protein 7 (254 aa).

The N-terminal stretch at 1–22 is a signal peptide; the sequence is MAKMQLSIFIAVVALIVCSASA. The FAS1 domain occupies 44 to 186; that stretch reads NVNLTELLSV…VAVYQVNRVL (143 aa). Asn46, Asn78, Asn104, and Asn130 each carry an N-linked (GlcNAc...) asparagine glycan. Positions 203–233 are disordered; that stretch reads APAPIVSAPSDSPSVADSEGASSPKSSHKNS. Residues 206-220 show a composition bias toward low complexity; sequence PIVSAPSDSPSVADS. Over residues 222-233 the composition is skewed to polar residues; sequence GASSPKSSHKNS. Asn232 is lipidated: GPI-anchor amidated asparagine. Positions 233-254 are cleaved as a propeptide — removed in mature form; it reads SGQKLLLAPISMVISGLVALFL.

This sequence belongs to the fasciclin-like AGP family.

The protein resides in the cell membrane. Functionally, may be a cell surface adhesion protein. The sequence is that of Fasciclin-like arabinogalactan protein 7 (FLA7) from Arabidopsis thaliana (Mouse-ear cress).